Consider the following 342-residue polypeptide: MINAGIVGGTGYTGVELLRILVQHPKVKLKVITSRQEAGTGVDELFSSLRGQIALKFSDPAKVDFSKCDVVFFATPNGIAMQQAKALLDSGIKVIDLAADFRIKDVAEWEKWYGMTHAAPELVAEAVYGLPEVNREKIRDARLIANPGCYPTAVQLGFIPLIEAGAVDADHLIADTKSGVSGAGRKAEIHTLYAEASDNFKSYAVPGHRHLPEIRQGLSERSNGPIGLTFVPHLTPMIRGIHATLYARLTRDVDLQTLYENRYANEPFVDVLPAGSHPETRSVRGSNFCRIAVHRPGNGDTAVILSVTDNLVKGAAGQAVQNMNIMYGLPETTGIRHVPLLP.

Residue C149 is part of the active site.

It belongs to the NAGSA dehydrogenase family. Type 1 subfamily.

Its subcellular location is the cytoplasm. The enzyme catalyses N-acetyl-L-glutamate 5-semialdehyde + phosphate + NADP(+) = N-acetyl-L-glutamyl 5-phosphate + NADPH + H(+). It functions in the pathway amino-acid biosynthesis; L-arginine biosynthesis; N(2)-acetyl-L-ornithine from L-glutamate: step 3/4. Functionally, catalyzes the NADPH-dependent reduction of N-acetyl-5-glutamyl phosphate to yield N-acetyl-L-glutamate 5-semialdehyde. This chain is N-acetyl-gamma-glutamyl-phosphate reductase, found in Nitrosomonas europaea (strain ATCC 19718 / CIP 103999 / KCTC 2705 / NBRC 14298).